The primary structure comprises 215 residues: Probable phosphoglycerate mutase GpmB (215 aa).

Residues 8-15 (RHGETQWN), 21-22 (QG), Arg-58, Arg-60, 82-85 (ELNM), 104-105 (RR), and 151-152 (GI) each bind substrate. His-9 functions as the Tele-phosphohistidine intermediate in the catalytic mechanism. The active-site Proton donor/acceptor is the Glu-82.

The protein belongs to the phosphoglycerate mutase family. GpmB subfamily.

The enzyme catalyses (2R)-2-phosphoglycerate = (2R)-3-phosphoglycerate. It functions in the pathway carbohydrate degradation; glycolysis; pyruvate from D-glyceraldehyde 3-phosphate: step 3/5. The chain is Probable phosphoglycerate mutase GpmB from Escherichia coli O1:K1 / APEC.